Consider the following 582-residue polypeptide: Proline--tRNA ligase (582 aa).

It belongs to the class-II aminoacyl-tRNA synthetase family. ProS type 1 subfamily. Homodimer.

Its subcellular location is the cytoplasm. It catalyses the reaction tRNA(Pro) + L-proline + ATP = L-prolyl-tRNA(Pro) + AMP + diphosphate. Catalyzes the attachment of proline to tRNA(Pro) in a two-step reaction: proline is first activated by ATP to form Pro-AMP and then transferred to the acceptor end of tRNA(Pro). As ProRS can inadvertently accommodate and process non-cognate amino acids such as alanine and cysteine, to avoid such errors it has two additional distinct editing activities against alanine. One activity is designated as 'pretransfer' editing and involves the tRNA(Pro)-independent hydrolysis of activated Ala-AMP. The other activity is designated 'posttransfer' editing and involves deacylation of mischarged Ala-tRNA(Pro). The misacylated Cys-tRNA(Pro) is not edited by ProRS. The polypeptide is Proline--tRNA ligase (Mycobacterium avium (strain 104)).